Consider the following 307-residue polypeptide: MLRLKTQDSRLKTQDSRLKTQDSRLKTQDSRLKTQDSRLKTQDSRLKTQDSRLKTQDSRLKTQDSRLKTQDSRLKTQDSRLKTQDSRLKTQDSFSVDDNGSGNVFVCGDLVNSKENKVQFNGNNNKLIIEDDVECRWLTVIFRGDNNYVRIHKNSKIKGDIVATKGSKVIIGRRTTIGAGFEVVTDKCNVTIGHDCMIARDVILRASDGHPIFDIHSKKRINWAKDIIISSYVWVGRNVSIMKGVSVGSGSVIGYGSIVTKDVPSMCAAAGNPAKIIKRNIIWARTDKAELISDDKRCSSYHAKLTQ.

Over residues 1-90 (MLRLKTQDSR…LKTQDSRLKT (90 aa)) the composition is skewed to basic and acidic residues. A disordered region spans residues 1-95 (MLRLKTQDSR…SRLKTQDSFS (95 aa)). 13 repeat units span residues 3-9 (RLKTQDS), 10-16 (RLKTQDS), 17-23 (RLKTQDS), 24-30 (RLKTQDS), 31-37 (RLKTQDS), 38-44 (RLKTQDS), 45-51 (RLKTQDS), 52-58 (RLKTQDS), 59-65 (RLKTQDS), 66-72 (RLKTQDS), 73-79 (RLKTQDS), 80-86 (RLKTQDS), and 87-93 (RLKTQDS). Positions 3 to 93 (RLKTQDSRLK…QDSRLKTQDS (91 aa)) are 13 X 7 AA tandem repeat of RLKTQDS encoded by a 7 nucleotide repeat. Acetyl-CoA contacts are provided by residues 208 to 210 (DGH), Arg-237, Lys-243, Lys-261, and Lys-278.

The protein belongs to the transferase hexapeptide repeat family. As to quaternary structure, homotrimer. Hexamer formed by two homotrimers.

The catalysed reaction is [N-acetyl-alpha-D-neuraminosyl-(2-&gt;8)](n) + n acetyl-CoA = [N,O(9)-diacetyl-alpha-D-neuraminosyl-(2-&gt;8)](n) + n CoA. It carries out the reaction [N-acetyl-alpha-D-neuraminosyl-(2-&gt;8)](n) + n acetyl-CoA = [O(7),N-diacetyl-alpha-D-neuraminosyl-(2-&gt;8)](n) + n CoA. In terms of biological role, catalyzes the O-acetylation of capsular polymeric sialic acid. Shows high substrate specificity toward polymers of sialic acid that contains a large number of residues. This is Polysialic acid O-acetyltransferase from Escherichia coli O1:K1 / APEC.